We begin with the raw amino-acid sequence, 278 residues long: Cyclin-C (278 aa).

Positions 41–139 constitute a Cyclin N-terminal domain; it reads NVIQALGEHL…ILECEFYLLE (99 aa). Positions 247–278 are disordered; sequence TILSKMPKPKPPPNSEGEQGPNGSQNSSYSQS. The segment covering 267–278 has biased composition (polar residues); the sequence is PNGSQNSSYSQS. At Ser270 the chain carries Phosphoserine.

The protein belongs to the cyclin family. Cyclin C subfamily. As to quaternary structure, component of the Mediator complex, which is composed of MED1, MED4, MED6, MED7, MED8, MED9, MED10, MED11, MED12, MED13, MED13L, MED14, MED15, MED16, MED17, MED18, MED19, MED20, MED21, MED22, MED23, MED24, MED25, MED26, MED27, MED29, MED30, MED31, CCNC, CDK8 and CDC2L6/CDK11. The MED12, MED13, CCNC and CDK8 subunits form a distinct module termed the CDK8 module. Mediator containing the CDK8 module is less active than Mediator lacking this module in supporting transcriptional activation. Individual preparations of the Mediator complex lacking one or more distinct subunits have been variously termed ARC, CRSP, DRIP, PC2, SMCC and TRAP. The cylin/CDK pair formed by CCNC/CDK8 also associates with the large subunit of RNA polymerase II.

The protein resides in the nucleus. Component of the Mediator complex, a coactivator involved in regulated gene transcription of nearly all RNA polymerase II-dependent genes. Mediator functions as a bridge to convey information from gene-specific regulatory proteins to the basal RNA polymerase II transcription machinery. Mediator is recruited to promoters by direct interactions with regulatory proteins and serves as a scaffold for the assembly of a functional preinitiation complex with RNA polymerase II and the general transcription factors. Binds to and activates cyclin-dependent kinase CDK8 that phosphorylates the CTD (C-terminal domain) of the large subunit of RNA polymerase II (RNAp II), which may inhibit the formation of a transcription initiation complex. The chain is Cyclin-C (Ccnc) from Rattus norvegicus (Rat).